Reading from the N-terminus, the 39-residue chain is Phosphatase RapI inhibitor (39 aa).

A propeptide spanning residues 1–34 (MKISRILLAAVILSSVFSITYLQSDHNTEIKVAA) is cleaved from the precursor.

It belongs to the Phr family. In terms of processing, contains a predicted signal peptide cleavage site in the N-terminal region, however the propeptide is probably subject to only one processing event, at the N-terminal end of the mature peptide.

The protein resides in the secreted. It is found in the cytoplasm. Functionally, intercellular signaling molecule that inhibits excision of the mobile genetic element ICEBs1 when cells are crowded by cells that contain ICEBs1 and produce the PhrI peptide. Secreted during production, but the mature peptide acts intracellularly, indicating that it needs to be imported into the cell to function. Acts by inhibiting RapI activity. The polypeptide is Phosphatase RapI inhibitor (phrI) (Bacillus subtilis (strain 168)).